A 207-amino-acid chain; its full sequence is Ribonuclease HII (207 aa).

The region spanning Gln-20–Glu-207 is the RNase H type-2 domain. The a divalent metal cation site is built by Asp-26, Glu-27, and Asp-118.

This sequence belongs to the RNase HII family. Mn(2+) serves as cofactor. It depends on Mg(2+) as a cofactor.

It is found in the cytoplasm. The catalysed reaction is Endonucleolytic cleavage to 5'-phosphomonoester.. Its function is as follows. Endonuclease that specifically degrades the RNA of RNA-DNA hybrids. This chain is Ribonuclease HII, found in Aliivibrio fischeri (strain MJ11) (Vibrio fischeri).